The sequence spans 66 residues: Conotoxin Cal6.38 (66 aa).

Positions 1-22 (MKLTFVLIVAVLVLAVCNFTVA) are cleaved as a signal peptide. Disulfide bonds link Cys38–Cys55, Cys45–Cys59, and Cys54–Cys64.

Belongs to the conotoxin O1 superfamily. As to expression, expressed by the venom duct.

The protein localises to the secreted. Its function is as follows. Probable neurotoxin. The chain is Conotoxin Cal6.38 from Californiconus californicus (California cone).